The following is a 1182-amino-acid chain: Receptor-type guanylate cyclase gcy-19 (1182 aa).

The N-terminal stretch at 1–24 (MEYLLFLLLFAGFLTFLPRFLIYA) is a signal peptide. The Extracellular portion of the chain corresponds to 25-507 (QITSSTTTTT…PQSFVDQYGA (483 aa)). N-linked (GlcNAc...) asparagine glycosylation is found at Asn91, Asn369, Asn430, and Asn453. A helical membrane pass occupies residues 508 to 528 (LVFAIGGVLIFAMLFVITCFF). Topologically, residues 529–1182 (YVMRQKRLER…FRRQETLALI (654 aa)) are cytoplasmic. The 288-residue stretch at 562–849 (RMSKRSLQSG…KGNLMDHVFN (288 aa)) folds into the Protein kinase domain. The region spanning 907–1037 (TVFFSDVVKF…DTVNTASRME (131 aa)) is the Guanylate cyclase domain. Positions 1094–1164 (VSSNSGYQSD…EAKARDIHNE (71 aa)) are disordered. Positions 1142-1152 (SPTLSKRSVSP) are enriched in low complexity.

This sequence belongs to the adenylyl cyclase class-4/guanylyl cyclase family. Expressed in IL2 sensory neurons.

Its subcellular location is the cell membrane. It catalyses the reaction GTP = 3',5'-cyclic GMP + diphosphate. In terms of biological role, guanylate cyclase involved in the production of the second messenger cGMP. In Caenorhabditis elegans, this protein is Receptor-type guanylate cyclase gcy-19.